We begin with the raw amino-acid sequence, 180 residues long: CD-NTase/cGAS isopeptidase (180 aa).

The region spanning 33–165 is the MPN domain; the sequence is IVISSSTIEQ…AGSYSLSASV (133 aa). The active-site Proton donor/acceptor is Glu54. His115, His117, and Asp128 together coordinate Zn(2+).

The protein belongs to the peptidase M67B family. Cap3 isopeptidase subfamily.

Functionally, metalloprotease priming reversal component of a CBASS antivirus system. CBASS (cyclic oligonucleotide-based antiphage signaling system) provides immunity against bacteriophages. The CD-NTase protein (CdnD) synthesizes cyclic nucleotides in response to infection; these serve as specific second messenger signals. The signals activate a diverse range of effectors, leading to bacterial cell death and thus abortive phage infection. A type II-C(AAG) CBASS system. Reverses the primed state of DncV, the CD-NTase. Cleaves a CdnD-GFP (green fluorescent protein) fusion protein precisely at the C-terminus of CdnD. Overexpression decreases the efficacy of CBASS protection against phage T2. Antagonism of phage defense upon overexpression is CBASS-system specific, Cap3 from this bacteria only antagonizes its cognate CBASS system and not that of C.freundii, E.coli or V.cholerae. In terms of biological role, protects E.coli against phage T2 infection. When the cdnD-cap2-cap3-cap4 operon is introduced in E.coli there is a more than 10(3) decrease in the efficiency of T2 plaque formation. The operon does not protect against phage T5 and only about 10-fold against T7. The polypeptide is CD-NTase/cGAS isopeptidase (Enterobacter hormaechei subsp. hoffmannii (strain UCI 50)).